The chain runs to 1430 residues: Transport and Golgi organization protein 1 (1430 aa).

The signal sequence occupies residues 1–34; that stretch reads MRLTNEKATMQPQLSDLALVLGLLICCLPTLTWA. Residues 35–796 are Extracellular-facing; it reads ATLSDKRLCA…ADKLVDHSQL (762 aa). In terms of domain architecture, SH3 spans 50 to 112; that stretch reads QIISMGIAKI…NKDFIMEKKI (63 aa). 5 disordered regions span residues 253–272, 284–303, 318–362, 445–524, and 568–673; these read QEEPKAQQPATEAEKPPPLP, DFDYGDDETDDDSQQGSQDN, ESIE…SLPT, SDAE…DQQK, and EEAE…TDNH. Over residues 284–296 the composition is skewed to acidic residues; the sequence is DFDYGDDETDDDS. Composition is skewed to basic and acidic residues over residues 331–357, 497–524, and 568–588; these read KKTDKVEDSKDETKEKHAEMEVSKQED, LQEEQEKQRLVAEAEEQKRLQEEADQQK, and EEAEKQKRLHEESEQLQRSSE. The stretch at 494-620 forms a coiled coil; sequence YKQLQEEQEK…QSNEIVDNNN (127 aa). Residues 594 to 621 are compositionally biased toward polar residues; the sequence is LSVQEANMQQLNDSVDSQSNEIVDNNNR. A compositionally biased stretch (low complexity) spans 640–651; the sequence is HPSTASHTTPTP. Residues 797-817 form a helical membrane-spanning segment; it reads LLCVVIAAISSLFFMFAYYCF. Topologically, residues 818–1430 are cytoplasmic; the sequence is CNSSQEGALL…SATSRPYSEV (613 aa). Phosphoserine is present on residues serine 865 and serine 868. The stretch at 869 to 1245 forms a coiled coil; it reads NDMVADLKKQ…SLRRKLTTMA (377 aa). The span at 1105–1114 shows a compositional bias: low complexity; sequence SQLQQSSQDV. 2 disordered regions span residues 1105–1126 and 1312–1430; these read SQLQQSSQDVEQLKQDFNQSER and LPPT…YSEV. Over residues 1115–1126 the composition is skewed to basic and acidic residues; that stretch reads EQLKQDFNQSER. Pro residues predominate over residues 1321–1334; the sequence is RPPPLGRMRSPPPS. Over residues 1336-1346 the composition is skewed to basic and acidic residues; that stretch reads RGDRDRERYSD. Residues serine 1345 and serine 1348 each carry the phosphoserine modification. Residues 1348–1361 show a composition bias toward acidic residues; that stretch reads SDYDDYDDDEEDDR. Basic residues predominate over residues 1364–1380; sequence DRRRRHSGSWGRRHRGS. The segment covering 1387 to 1402 has biased composition (polar residues); that stretch reads TYRSLSPSDSRYNYND. Phosphoserine occurs at positions 1390 and 1392. Positions 1408–1417 are enriched in pro residues; that stretch reads SPPPSPPPVP. Positions 1420 to 1430 are enriched in polar residues; the sequence is RSATSRPYSEV.

It belongs to the MIA/OTOR family. Tango1 subfamily.

The protein resides in the golgi apparatus membrane. It localises to the golgi apparatus. The protein localises to the trans-Golgi network. Functionally, required for protein secretion. May participate in cargo loading by binding to COPII coat subunits and guiding SH3-bound proteins into a growing carrier. At basal transitional ER sites in follicle epithelial cells, mediates the exit of basal membrane protein such as vkg, LanB1 and Trol, from the endoplasmic reticulum (ER) to basal Golgi clusters. The chain is Transport and Golgi organization protein 1 from Drosophila melanogaster (Fruit fly).